We begin with the raw amino-acid sequence, 784 residues long: Lon protease (784 aa).

The region spanning 11–204 (IPVLPLRDVV…YLMAMMESEI (194 aa)) is the Lon N-terminal domain. 356 to 363 (GPPGVGKT) serves as a coordination point for ATP. Positions 592–773 (ENRVGQVTGL…EEVLTLALQN (182 aa)) constitute a Lon proteolytic domain. Catalysis depends on residues Ser-679 and Lys-722.

Belongs to the peptidase S16 family. In terms of assembly, homohexamer. Organized in a ring with a central cavity. ATP binding and hydrolysis do not affect the oligomeric state of the enzyme.

It localises to the cytoplasm. The catalysed reaction is Hydrolysis of proteins in presence of ATP.. Contains an allosteric site (distinct from its active site), whose occupancy by an unfolded polypeptide leads to enzyme activation. Its function is as follows. ATP-dependent serine protease that mediates the selective degradation of mutant and abnormal proteins as well as certain short-lived regulatory proteins. Required for cellular homeostasis and for survival from DNA damage and developmental changes induced by stress. Degrades polypeptides processively to yield small peptide fragments that are 5 to 10 amino acids long. Binds to DNA in a double-stranded, site-specific manner. Endogenous substrates include the regulatory proteins RcsA and SulA, the transcriptional activator SoxS, and UmuD. Its overproduction specifically inhibits translation through at least two different pathways, one of them being the YoeB-YefM toxin-antitoxin system. In Escherichia coli O6:H1 (strain CFT073 / ATCC 700928 / UPEC), this protein is Lon protease.